The sequence spans 314 residues: Protein nutcracker (314 aa).

Residues 1-62 (MSDTKSEIEG…PRLIQEKSTQ (62 aa)) are disordered. Low complexity predominate over residues 21 to 34 (QQQQQPQQQQNEQQ). Residues 257-314 (MQMEMKLQPSLLGLPDELYFEIFRYLDKSQLNVVARVNRHLHFYSKEVERKRLKGGRS) form a required for interaction with skpA and Cul1, but not with PI31 region. The F-box domain maps to 264 to 309 (QPSLLGLPDELYFEIFRYLDKSQLNVVARVNRHLHFYSKEVERKRL).

Component of an SCF (SKP1-CUL1-F-box protein) E3 ubiquitin-protein ligase complex, at least composed of ntc, skpA and Cul1. Interacts (via F-box domain) with skpA and Cul1. Interacts with Prosalpha7 and PI31. Interacts with Bruce. As to expression, expressed in testis (at protein level).

The protein localises to the cytoplasm. Functionally, functions together with PI31 to control non-apoptotic caspase activation during sperm individualization. Positively regulates PI31 stability. This chain is Protein nutcracker, found in Drosophila melanogaster (Fruit fly).